A 93-amino-acid chain; its full sequence is Non-histone chromosomal protein 6A (93 aa).

Disordered regions lie at residues 1–23 (MVTP…APKR) and 69–93 (PYEA…ATLA). Residues 7-16 (PKKRTTRKKK) show a composition bias toward basic residues. A DNA-binding region (HMG box) is located at residues 21-89 (PKRALSAYMF…RYESEKELYN (69 aa)). Residues 69–87 (PYEAKAQADKKRYESEKEL) show a composition bias toward basic and acidic residues.

Belongs to the NHP6 family. In terms of assembly, weakly associates with the stable SPT16-POB3 heterodimer to form the FACT (yFACT or SNP) complex, which is associated with nucleosomes. Multiple molecules of NHP6 (NHP6A and/or NHP6B) are required to recruit the SPT16-POB3 heterodimer to DNA.

It is found in the nucleus. The protein resides in the chromosome. DNA-binding protein that induces severe bending of DNA. Required for DNA-binding by the FACT complex, a general chromatin factor that acts to reorganize nucleosomes. The FACT complex is involved in multiple processes that require DNA as a template such as mRNA elongation, DNA replication and DNA repair. Also augments the fidelity of transcription by RNA polymerase III independently of any role in the FACT complex. Required for transcriptional initiation fidelity of some but not all tRNA genes. Seems to be functionally redundant with NHP6B. This chain is Non-histone chromosomal protein 6A (NHP6A), found in Saccharomyces cerevisiae (strain ATCC 204508 / S288c) (Baker's yeast).